The sequence spans 110 residues: Large ribosomal subunit protein uL22 (110 aa).

Belongs to the universal ribosomal protein uL22 family. In terms of assembly, part of the 50S ribosomal subunit.

This protein binds specifically to 23S rRNA; its binding is stimulated by other ribosomal proteins, e.g. L4, L17, and L20. It is important during the early stages of 50S assembly. It makes multiple contacts with different domains of the 23S rRNA in the assembled 50S subunit and ribosome. Functionally, the globular domain of the protein is located near the polypeptide exit tunnel on the outside of the subunit, while an extended beta-hairpin is found that lines the wall of the exit tunnel in the center of the 70S ribosome. The chain is Large ribosomal subunit protein uL22 from Enterobacter sp. (strain 638).